The chain runs to 176 residues: MSRKDSWLTIGKLVGAQGLRGEVKVNPSSDFPERFINPGERWLQKNTEEPSRIELKSGRQLPGKSIYIVSFIGITDRNKAESIVGNKLLVPSDQKPKLKEGEFHLVDLLGLKAKFTQDGSDVGEVIDLTSAGNDLLVIKLVEGKTVLIPFVKEIVPVINLKQGWLLIKPPPGLLEL.

Positions 99–173 (KEGEFHLVDL…WLLIKPPPGL (75 aa)) constitute a PRC barrel domain.

Belongs to the RimM family. In terms of assembly, binds ribosomal protein uS19.

Its subcellular location is the cytoplasm. An accessory protein needed during the final step in the assembly of 30S ribosomal subunit, possibly for assembly of the head region. Essential for efficient processing of 16S rRNA. May be needed both before and after RbfA during the maturation of 16S rRNA. It has affinity for free ribosomal 30S subunits but not for 70S ribosomes. The chain is Ribosome maturation factor RimM from Prochlorococcus marinus (strain MIT 9211).